The sequence spans 38 residues: GVDKPGCRYMFGGCVQDDDCCPHLGCKRKGLYCAWDGT.

3 disulfides stabilise this stretch: Cys7–Cys21, Cys14–Cys26, and Cys20–Cys33. Residue Thr38 is modified to Threonine amide.

Belongs to the neurotoxin 10 (Hwtx-1) family. 28 (Jztx-11) subfamily. As to expression, expressed by the venom gland.

The protein localises to the secreted. Its function is as follows. Paralytic toxin that inhibits insect voltage-gated sodium (Nav) and calcium (Cav) channels in P.americana (American cockroach) dorsal unpaired median (DUM) neurons, and inhibits the B.germanica (German cockroach) Nav channel (BgNaV1). Also shows a delay in fast inactivation when tested on BgNaV1. May act as a gating-modifier toxin on Nav and as a pore blocker on Cav. In vivo, reversibly paralyzes both L.cuprina (Australian sheep blowfly) and M.domestica (housefly), but does not affect larvae of H.armigera (cotton bollworms). This Monocentropus balfouri (Socotra Island blue baboon tarantula) protein is Mu/omega-theraphotoxin-Mb1a.